Reading from the N-terminus, the 265-residue chain is Tryptophan synthase alpha chain (265 aa).

Catalysis depends on proton acceptor residues E48 and D59.

This sequence belongs to the TrpA family. Tetramer of two alpha and two beta chains.

The enzyme catalyses (1S,2R)-1-C-(indol-3-yl)glycerol 3-phosphate + L-serine = D-glyceraldehyde 3-phosphate + L-tryptophan + H2O. It functions in the pathway amino-acid biosynthesis; L-tryptophan biosynthesis; L-tryptophan from chorismate: step 5/5. Its function is as follows. The alpha subunit is responsible for the aldol cleavage of indoleglycerol phosphate to indole and glyceraldehyde 3-phosphate. This Pelagibacter ubique (strain HTCC1062) protein is Tryptophan synthase alpha chain.